Here is a 222-residue protein sequence, read N- to C-terminus: Pleckstrin homology domain-containing family B member 2 (222 aa).

The PH domain occupies 2–109 (AFVKSGWLLR…WKFTLQDSRT (108 aa)). K20 contributes to the a 1,2-diacyl-sn-glycero-3-phospho-L-serine binding site.

It localises to the recycling endosome membrane. Involved in retrograde transport of recycling endosomes. The chain is Pleckstrin homology domain-containing family B member 2 (PLEKHB2) from Pongo abelii (Sumatran orangutan).